A 367-amino-acid chain; its full sequence is Chorismate synthase (367 aa).

R48 contributes to the NADP(+) binding site. FMN is bound by residues 125 to 127, 243 to 244, G283, 298 to 302, and R324; these read RSS, NA, and KPTSS.

It belongs to the chorismate synthase family. In terms of assembly, homotetramer. FMNH2 is required as a cofactor.

It catalyses the reaction 5-O-(1-carboxyvinyl)-3-phosphoshikimate = chorismate + phosphate. It participates in metabolic intermediate biosynthesis; chorismate biosynthesis; chorismate from D-erythrose 4-phosphate and phosphoenolpyruvate: step 7/7. Catalyzes the anti-1,4-elimination of the C-3 phosphate and the C-6 proR hydrogen from 5-enolpyruvylshikimate-3-phosphate (EPSP) to yield chorismate, which is the branch point compound that serves as the starting substrate for the three terminal pathways of aromatic amino acid biosynthesis. This reaction introduces a second double bond into the aromatic ring system. This Psychrobacter arcticus (strain DSM 17307 / VKM B-2377 / 273-4) protein is Chorismate synthase.